The sequence spans 533 residues: Multicopy suppressor of sporulation protein msa1 (533 aa).

Residues 30 to 68 (DIPPGSLSENDNSTTFIKPPLETASSSTPIPSSSSSGVL) form a disordered region. Residues 36–45 (LSENDNSTTF) are compositionally biased toward polar residues. The segment covering 54–68 (SSSTPIPSSSSSGVL) has biased composition (low complexity). The region spanning 79-158 (ACLFVASLNS…RHIRIERAKV (80 aa)) is the RRM 1 domain. Positions 237–292 (YKKKGSSPFSPPNAHSRRRKSQGKDQSNTPVIKAPAPIPFSVSSDPPSTMGRSNSA) are disordered. A compositionally biased stretch (polar residues) spans 277–292 (SVSSDPPSTMGRSNSA). In terms of domain architecture, RRM 2 spans 365 to 441 (YSIFVGQLDP…KPLRVEFRQL (77 aa)).

Its subcellular location is the cytoplasm. Functionally, negative regulator of sexual differentiation. Acts by repressing the transcription of meiosis-inducing, ste11-regulated genes. This is Multicopy suppressor of sporulation protein msa1 (msa1) from Schizosaccharomyces pombe (strain 972 / ATCC 24843) (Fission yeast).